We begin with the raw amino-acid sequence, 233 residues long: Lipoprotein-releasing system ATP-binding protein LolD (233 aa).

The 228-residue stretch at 6–233 (LQCDNLCKRY…TAELSLMGAE (228 aa)) folds into the ABC transporter domain. Residue 42 to 49 (GSSGSGKS) coordinates ATP.

This sequence belongs to the ABC transporter superfamily. Lipoprotein translocase (TC 3.A.1.125) family. The complex is composed of two ATP-binding proteins (LolD) and two transmembrane proteins (LolC and LolE).

It is found in the cell inner membrane. Its function is as follows. Part of the ABC transporter complex LolCDE involved in the translocation of mature outer membrane-directed lipoproteins, from the inner membrane to the periplasmic chaperone, LolA. Responsible for the formation of the LolA-lipoprotein complex in an ATP-dependent manner. Such a release is dependent of the sorting-signal (absence of an Asp at position 2 of the mature lipoprotein) and of LolA. The chain is Lipoprotein-releasing system ATP-binding protein LolD from Escherichia coli (strain K12).